The primary structure comprises 318 residues: Olfactory receptor-like protein COR1 (318 aa).

Residues 1–26 (MASGNCTTPTTFILSGLTDNPGLQMP) are Extracellular-facing. Asn-5 carries N-linked (GlcNAc...) asparagine glycosylation. The chain crosses the membrane as a helical span at residues 27–49 (LFMVFLAIYTITLLTNLGLIALI). Topologically, residues 50–57 (SVDLHLQT) are cytoplasmic. Residues 58 to 79 (PMYIFLQNLSFTDAAYSTVITP) traverse the membrane as a helical segment. Residues 80–100 (KMLATFLEERKTISYVGCILQ) lie on the Extracellular side of the membrane. Cys-97 and Cys-179 are oxidised to a cystine. The helical transmembrane segment at 101–120 (YFSFVLLTVTESLLLAVMAY) threads the bilayer. The Cytoplasmic segment spans residues 121 to 139 (DRYVAICKPLLYPSIMTKA). A helical membrane pass occupies residues 140–164 (VCWRLVESLYFLAFLNSLVHTSGLL). Over 165-205 (KLSFCYSNVVNHFFCDISPLFQISSSSIAISELLVIISGSL) the chain is Extracellular. The chain crosses the membrane as a helical span at residues 206-226 (FVMSSIIIILISYVFIILTVV). The Cytoplasmic segment spans residues 227-239 (MIRSKDGKYKAFS). A helical membrane pass occupies residues 240 to 260 (TCTSHLMAVSLFHGTVIFMYL). At 261–271 (RPVKLFSLDTD) the chain is on the extracellular side. The helical transmembrane segment at 272–292 (KIASLFYTVVIPMLNPLIYSW) threads the bilayer. Topologically, residues 293 to 318 (RNKEVKDALRRLTATTFGFIDSKAVQ) are cytoplasmic.

This sequence belongs to the G-protein coupled receptor 1 family.

Its subcellular location is the cell membrane. In terms of biological role, odorant receptor. This is Olfactory receptor-like protein COR1 (COR1) from Gallus gallus (Chicken).